Here is a 467-residue protein sequence, read N- to C-terminus: Probable amino acid permease 7 (467 aa).

The Cytoplasmic segment spans residues 1–29 (MDIKEDDESRVITPTELQLHDSVTARTGT). A helical membrane pass occupies residues 30–50 (LWTAVAHIITGVIGAGVLSLA). The Extracellular segment spans residues 51-58 (WATAELGW). Residues 59-79 (IAGPAALIAFAGVTLLSAFLL) traverse the membrane as a helical segment. Residues 80-111 (SDCYRFPDPNNGPLRLNSYSQAVKLYLGKKNE) lie on the Cytoplasmic side of the membrane. A helical membrane pass occupies residues 112 to 132 (IVCGVVVYISLFGCGIAYTIV). The Extracellular segment spans residues 133-163 (IATCSRAIMKSNCYHRNGHNATCSYGDNNNY). A run of 2 helical transmembrane segments spans residues 164-184 (FMVL…FHNM) and 185-205 (VWLS…GIGL). Topologically, residues 206–231 (ALGKIIENRKIEGSIRGIPAENRGEK) are extracellular. A helical membrane pass occupies residues 232 to 252 (VWIVFQALGNIAFSYPFSIIL). The Cytoplasmic segment spans residues 253–274 (LEIQDTLRSPPAEKQTMKKAST). A helical transmembrane segment spans residues 275–295 (VAVFIQTFFFFCCGCFGYAAF). Over 296–312 (GDSTPGNLLTGFGFYEP) the chain is Extracellular. Residues 313 to 333 (FWLVDFANACIVLHLVGGYQV) form a helical membrane-spanning segment. At 334-383 (YSQPIFAAAERSLTKKYPENKFIARFYGFKLPLLRGETVRLNPMRMCLRT) the chain is on the cytoplasmic side. Helical transmembrane passes span 384–404 (MYVL…EVLG) and 405–425 (VVGA…MCIL). Residues 426-443 (QKKIRSWTRPWLLLRGFS) lie on the Cytoplasmic side of the membrane. A helical membrane pass occupies residues 444-464 (FVCLLVCLLSLVGSIYGLVGA). The Extracellular portion of the chain corresponds to 465-467 (KFG).

Belongs to the amino acid/polyamine transporter 2 family. Amino acid/auxin permease (AAAP) (TC 2.A.18.2) subfamily.

It is found in the cell membrane. Functionally, amino acid-proton symporter. Stereospecific transporter with a broad specificity for neutral amino acids. The sequence is that of Probable amino acid permease 7 (AAP7) from Arabidopsis thaliana (Mouse-ear cress).